Consider the following 238-residue polypeptide: Monocyte to macrophage differentiation factor (238 aa).

The Cytoplasmic portion of the chain corresponds to 1 to 28; that stretch reads MRFKNRFQRFMNHRAPANGRYKPTCYEH. Residues 29 to 49 form a helical membrane-spanning segment; that stretch reads AANCYTHAFLIVPAIVGSALL. The Lumenal portion of the chain corresponds to 50 to 61; it reads HRLSDDCWEKIT. The helical transmembrane segment at 62–82 threads the bilayer; that stretch reads AWIYGMGLCALFIVSTVFHIV. Residues 83–101 lie on the Cytoplasmic side of the membrane; the sequence is SWKKSHLRTVEHCFHMCDR. A helical transmembrane segment spans residues 102-122; the sequence is MVIYFFIAASYAPWLNLRELG. Over 123–124 the chain is Lumenal; sequence PL. The chain crosses the membrane as a helical span at residues 125–145; that stretch reads ASHMRWFIWLMAAGGTIYVFL. At 146–151 the chain is on the cytoplasmic side; it reads YHEKYK. A helical transmembrane segment spans residues 152–172; the sequence is VVELFFYLTMGFSPALVVTSM. Residues 173-174 are Lumenal-facing; that stretch reads NN. Residues 175–195 traverse the membrane as a helical segment; sequence TDGLQELACGGLIYCLGVVFF. The Cytoplasmic portion of the chain corresponds to 196 to 198; sequence KSD. The helical transmembrane segment at 199–219 threads the bilayer; the sequence is GIIPFAHAIWHLFVATAAAVH. At 220–238 the chain is on the lumenal side; sequence YYAIWKYLYRSPTDFMRHL.

It belongs to the ADIPOR family. Exhibits relatively ubiquitous expression with preferential expression in mature (in vitro differentiated) macrophages.

It localises to the late endosome membrane. It is found in the lysosome membrane. Functionally, involved in the dynamics of lysosomal membranes associated with microglial activation following brain lesion. The sequence is that of Monocyte to macrophage differentiation factor from Homo sapiens (Human).